Consider the following 55-residue polypeptide: Spermatid nuclear transition protein 1 (55 aa).

Residues 1–42 (MSTSRKLKTHGMRRGKNRAPHKGVKRGGSKRKYRKSSLKSRK) show a composition bias toward basic residues. Positions 1 to 55 (MSTSRKLKTHGMRRGKNRAPHKGVKRGGSKRKYRKSSLKSRKRGDDASRNYRSHL) are disordered. 3 positions are modified to phosphoserine: Ser-36, Ser-37, and Ser-40.

Belongs to the nuclear transition protein 1 family. In terms of tissue distribution, testis.

Its subcellular location is the nucleus. It localises to the chromosome. Functionally, plays a key role in the replacement of histones to protamine in the elongating spermatids of mammals. In condensing spermatids, loaded onto the nucleosomes, where it promotes the recruitment and processing of protamines, which are responsible for histone eviction. This chain is Spermatid nuclear transition protein 1 (Tnp1), found in Rattus norvegicus (Rat).